Reading from the N-terminus, the 178-residue chain is Phosphopantetheine adenylyltransferase (178 aa).

T17 contributes to the substrate binding site. ATP is bound by residues 17–18 (TF) and H25. K49, L86, and R100 together coordinate substrate. Residues 101–103 (GLR), E111, and 136–142 (LQPVASR) contribute to the ATP site.

The protein belongs to the bacterial CoaD family. In terms of assembly, homohexamer. It depends on Mg(2+) as a cofactor.

The protein localises to the cytoplasm. The enzyme catalyses (R)-4'-phosphopantetheine + ATP + H(+) = 3'-dephospho-CoA + diphosphate. Its pathway is cofactor biosynthesis; coenzyme A biosynthesis; CoA from (R)-pantothenate: step 4/5. In terms of biological role, reversibly transfers an adenylyl group from ATP to 4'-phosphopantetheine, yielding dephospho-CoA (dPCoA) and pyrophosphate. The sequence is that of Phosphopantetheine adenylyltransferase from Zymomonas mobilis subsp. mobilis (strain ATCC 31821 / ZM4 / CP4).